The primary structure comprises 454 residues: Tyrosine aminotransferase (454 aa).

Residue Met1 is modified to N-acetylmethionine. The residue at position 280 (Lys280) is an N6-(pyridoxal phosphate)lysine. Position 448 is a phosphoserine (Ser448).

This sequence belongs to the class-I pyridoxal-phosphate-dependent aminotransferase family. As to quaternary structure, homodimer. It depends on pyridoxal 5'-phosphate as a cofactor.

The catalysed reaction is L-tyrosine + 2-oxoglutarate = 3-(4-hydroxyphenyl)pyruvate + L-glutamate. The protein operates within amino-acid degradation; L-phenylalanine degradation; acetoacetate and fumarate from L-phenylalanine: step 2/6. Its function is as follows. Transaminase involved in tyrosine breakdown. Converts tyrosine to p-hydroxyphenylpyruvate. Can catalyze the reverse reaction, using glutamic acid, with 2-oxoglutarate as cosubstrate (in vitro). Has much lower affinity and transaminase activity towards phenylalanine. In Homo sapiens (Human), this protein is Tyrosine aminotransferase (TAT).